Consider the following 128-residue polypeptide: Crossover junction endodeoxyribonuclease Hjc (128 aa).

Residue Glu-10 participates in Mg(2+) binding. Ser-30 is a catalytic residue. The Mg(2+) site is built by Asp-34 and Glu-47.

This sequence belongs to the Holliday junction resolvase Hjc family. As to quaternary structure, homodimer. Requires Mg(2+) as cofactor.

The catalysed reaction is Endonucleolytic cleavage at a junction such as a reciprocal single-stranded crossover between two homologous DNA duplexes (Holliday junction).. In terms of biological role, a structure-specific endonuclease that resolves Holliday junction (HJ) intermediates during genetic recombination. Cleaves 4-way DNA junctions introducing paired nicks in opposing strands, leaving a 5'-terminal phosphate and a 3'-terminal hydroxyl group that are subsequently ligated to produce recombinant products. This chain is Crossover junction endodeoxyribonuclease Hjc, found in Thermococcus kodakarensis (strain ATCC BAA-918 / JCM 12380 / KOD1) (Pyrococcus kodakaraensis (strain KOD1)).